The sequence spans 294 residues: N-acetylmuramic acid 6-phosphate etherase (294 aa).

The SIS domain occupies 54 to 217 (VIQSFEEEGR…STASMIGVGK (164 aa)). The active-site Proton donor is Glu82. Glu113 is an active-site residue.

Belongs to the GCKR-like family. MurNAc-6-P etherase subfamily. Homodimer.

It carries out the reaction N-acetyl-D-muramate 6-phosphate + H2O = N-acetyl-D-glucosamine 6-phosphate + (R)-lactate. Its pathway is amino-sugar metabolism; N-acetylmuramate degradation. Its function is as follows. Specifically catalyzes the cleavage of the D-lactyl ether substituent of MurNAc 6-phosphate, producing GlcNAc 6-phosphate and D-lactate. In Bacillus cereus (strain AH820), this protein is N-acetylmuramic acid 6-phosphate etherase.